We begin with the raw amino-acid sequence, 400 residues long: Elongation factor Tu (400 aa).

The tr-type G domain occupies 10 to 209 (KPHVNIGTIG…EVDKYIPTPE (200 aa)). The G1 stretch occupies residues 19-26 (GHVDHGKT). Residue 19–26 (GHVDHGKT) participates in GTP binding. Thr-26 serves as a coordination point for Mg(2+). Residues 60 to 64 (GITIN) are G2. The G3 stretch occupies residues 81–84 (DCPG). Residues 81 to 85 (DCPGH) and 136 to 139 (NKAD) each bind GTP. The segment at 136 to 139 (NKAD) is G4. Residues 174–176 (SGL) are G5.

Belongs to the TRAFAC class translation factor GTPase superfamily. Classic translation factor GTPase family. EF-Tu/EF-1A subfamily. Monomer.

The protein resides in the cytoplasm. It catalyses the reaction GTP + H2O = GDP + phosphate + H(+). Its function is as follows. GTP hydrolase that promotes the GTP-dependent binding of aminoacyl-tRNA to the A-site of ribosomes during protein biosynthesis. This is Elongation factor Tu from Heliobacterium modesticaldum (strain ATCC 51547 / Ice1).